The sequence spans 243 residues: Phosphoribosylaminoimidazole-succinocarboxamide synthase (243 aa).

Belongs to the SAICAR synthetase family.

It catalyses the reaction 5-amino-1-(5-phospho-D-ribosyl)imidazole-4-carboxylate + L-aspartate + ATP = (2S)-2-[5-amino-1-(5-phospho-beta-D-ribosyl)imidazole-4-carboxamido]succinate + ADP + phosphate + 2 H(+). Its pathway is purine metabolism; IMP biosynthesis via de novo pathway; 5-amino-1-(5-phospho-D-ribosyl)imidazole-4-carboxamide from 5-amino-1-(5-phospho-D-ribosyl)imidazole-4-carboxylate: step 1/2. The polypeptide is Phosphoribosylaminoimidazole-succinocarboxamide synthase (Lactiplantibacillus plantarum (strain ATCC BAA-793 / NCIMB 8826 / WCFS1) (Lactobacillus plantarum)).